Reading from the N-terminus, the 396-residue chain is dTDP-epi-vancosaminyltransferase (396 aa).

10–12 provides a ligand contact to dTDP-beta-L-4-epi-vancosamine; it reads SRG. 4 residues coordinate devancoaminyl-vancomycin: Asp-127, Gln-133, Tyr-141, and Tyr-169. DTDP-beta-L-4-epi-vancosamine contacts are provided by residues Arg-207, Ser-230, 277-278, and 293-298; these read EV and HDSAGT.

The protein belongs to the glycosyltransferase 28 family.

It catalyses the reaction dTDP-beta-L-4-epi-vancosamine + devancoaminyl-vancomycin = chloroorienticin B + dTDP + H(+). The protein operates within antibiotic biosynthesis; vancomycin biosynthesis. Its function is as follows. Catalyzes the attachment of 4-epi-vancosamine from a TDP donor to the beta-OH-Tyr-6 of the aglycone cosubstrate in the biosynthesis of glycopeptide antibiotic chloroeremomycin, a member of the vancomycin group of antibiotics. Strongly prefers devancoaminyl-vancomycin (DVV) as substrate rather than the heptapeptide vancomycin aglycone (AGV). Acts downstream of GtfB. The chain is dTDP-epi-vancosaminyltransferase (gtfA) from Amycolatopsis orientalis (Nocardia orientalis).